The following is a 349-amino-acid chain: Probable L-asparaginase periplasmic (349 aa).

An N-terminal signal peptide occupies residues Met-1–Ala-21. One can recognise an Asparaginase/glutaminase domain in the interval Pro-25–Phe-349. Thr-35 (O-isoaspartyl threonine intermediate) is an active-site residue. Substrate is bound by residues Ser-81 and Thr-112 to Asp-113. Cysteines 100 and 128 form a disulfide.

This sequence belongs to the asparaginase 1 family.

It localises to the periplasm. It carries out the reaction L-asparagine + H2O = L-aspartate + NH4(+). This chain is Probable L-asparaginase periplasmic (ansB), found in Haemophilus influenzae (strain ATCC 51907 / DSM 11121 / KW20 / Rd).